We begin with the raw amino-acid sequence, 494 residues long: Transcription termination factor MTERF4, chloroplastic (494 aa).

A chloroplast-targeting transit peptide spans 1–54 (MMKSLLFSAHPTSLLLPAPRLRRLLRLRAASSASASAPPRADRRSPGTPSRRPS). 2 disordered regions span residues 32-61 (SASA…YARP) and 457-494 (VEEM…EFVR). Over residues 46-56 (PGTPSRRPSSS) the composition is skewed to low complexity. Acidic residues-rich tracts occupy residues 457 to 466 (VEEMEREDSS) and 473 to 494 (DEVE…EFVR).

The protein belongs to the mTERF family.

It localises to the plastid. The protein localises to the chloroplast stroma. In terms of biological role, transcription termination factor required for processing and steady-state levels of plastid transcripts. Required for splicing of the chloroplastic group II intron. Required for the accumulation of 16S and 23S ribosomes. The protein is Transcription termination factor MTERF4, chloroplastic of Zea mays (Maize).